The primary structure comprises 80 residues: UPF0512 protein Q (80 aa).

The protein belongs to the UPF0512 family.

The sequence is that of UPF0512 protein Q from Dictyostelium discoideum (Social amoeba).